The primary structure comprises 125 residues: Large ribosomal subunit protein bL12 (125 aa).

Belongs to the bacterial ribosomal protein bL12 family. As to quaternary structure, homodimer. Part of the ribosomal stalk of the 50S ribosomal subunit. Forms a multimeric L10(L12)X complex, where L10 forms an elongated spine to which 2 to 4 L12 dimers bind in a sequential fashion. Binds GTP-bound translation factors.

Functionally, forms part of the ribosomal stalk which helps the ribosome interact with GTP-bound translation factors. Is thus essential for accurate translation. This Chlorobium phaeobacteroides (strain DSM 266 / SMG 266 / 2430) protein is Large ribosomal subunit protein bL12.